We begin with the raw amino-acid sequence, 652 residues long: tRNA 5-methylaminomethyl-2-thiouridine biosynthesis bifunctional protein MnmC (652 aa).

Residues 1–235 form a tRNA (mnm(5)s(2)U34)-methyltransferase region; sequence MPDRLVPATL…EPALRVGEYA (235 aa). The interval 259-652 is FAD-dependent cmnm(5)s(2)U34 oxidoreductase; sequence IGAGLAGCAV…IRALRGRQIG (394 aa).

This sequence in the N-terminal section; belongs to the methyltransferase superfamily. tRNA (mnm(5)s(2)U34)-methyltransferase family. The protein in the C-terminal section; belongs to the DAO family. FAD is required as a cofactor.

The protein resides in the cytoplasm. It carries out the reaction 5-aminomethyl-2-thiouridine(34) in tRNA + S-adenosyl-L-methionine = 5-methylaminomethyl-2-thiouridine(34) in tRNA + S-adenosyl-L-homocysteine + H(+). Catalyzes the last two steps in the biosynthesis of 5-methylaminomethyl-2-thiouridine (mnm(5)s(2)U) at the wobble position (U34) in tRNA. Catalyzes the FAD-dependent demodification of cmnm(5)s(2)U34 to nm(5)s(2)U34, followed by the transfer of a methyl group from S-adenosyl-L-methionine to nm(5)s(2)U34, to form mnm(5)s(2)U34. The polypeptide is tRNA 5-methylaminomethyl-2-thiouridine biosynthesis bifunctional protein MnmC (Burkholderia ambifaria (strain MC40-6)).